The sequence spans 83 residues: uncharacterized protein (83 aa).

This is an uncharacterized protein from Bacillus anthracis.